A 515-amino-acid chain; its full sequence is Zinc-binding protein AdcA (515 aa).

A signal peptide spans 1-28; the sequence is MKKKILLMMSLISVFFAWQLTQAKQVLA. His-66 is a Zn(2+) binding site. Residues 125–148 are disordered; it reads DHHHEDADKKHEHNKHSEEGHNHA. The tract at residues 129-148 is his-rich loop; that stretch reads EDADKKHEHNKHSEEGHNHA. Zn(2+)-binding residues include His-152, His-216, and Glu-291.

The protein belongs to the bacterial solute-binding protein 9 family.

Its function is as follows. Part of the ATP-binding cassette (ABC) transport system AdcABC involved in zinc import. Binds zinc with high affinity and specificity and delivers it to the membrane permease for translocation into the cytoplasm. The sequence is that of Zinc-binding protein AdcA (adcA) from Streptococcus pyogenes serotype M1.